The following is a 318-amino-acid chain: Methionyl-tRNA formyltransferase (318 aa).

Residue Ser-112 to Pro-115 participates in (6S)-5,6,7,8-tetrahydrofolate binding.

The protein belongs to the Fmt family.

The enzyme catalyses L-methionyl-tRNA(fMet) + (6R)-10-formyltetrahydrofolate = N-formyl-L-methionyl-tRNA(fMet) + (6S)-5,6,7,8-tetrahydrofolate + H(+). Attaches a formyl group to the free amino group of methionyl-tRNA(fMet). The formyl group appears to play a dual role in the initiator identity of N-formylmethionyl-tRNA by promoting its recognition by IF2 and preventing the misappropriation of this tRNA by the elongation apparatus. The chain is Methionyl-tRNA formyltransferase from Shewanella oneidensis (strain ATCC 700550 / JCM 31522 / CIP 106686 / LMG 19005 / NCIMB 14063 / MR-1).